Reading from the N-terminus, the 440-residue chain is Protein C-ets-1 (440 aa).

2 positions are modified to N6-acetyllysine; alternate: Lys-8 and Lys-15. Residues Lys-8 and Lys-15 each participate in a glycyl lysine isopeptide (Lys-Gly) (interchain with G-Cter in SUMO2); alternate cross-link. Lys-15 participates in a covalent cross-link: Glycyl lysine isopeptide (Lys-Gly) (interchain with G-Cter in SUMO); alternate. Thr-38 carries the phosphothreonine; by MAPK modification. The PNT domain occupies 51 to 136 (ATFSGFTKEQ…EHLEILQKED (86 aa)). The interval 130 to 243 (EILQKEDVKP…DNMCLGRASR (114 aa)) is activation domain; required for transcription activation. Residue Lys-138 forms a Glycyl lysine isopeptide (Lys-Gly) (interchain with G-Cter in SUMO2) linkage. Tyr-223 is subject to Phosphotyrosine. Lys-227 is covalently cross-linked (Glycyl lysine isopeptide (Lys-Gly) (interchain with G-Cter in SUMO)). Phosphoserine; by CaMK2 is present on Ser-251. Ser-254 is subject to Phosphoserine. Thr-265 is modified (phosphothreonine). Ser-267 and Ser-270 each carry phosphoserine. Phosphoserine; by CaMK2 occurs at positions 282 and 285. Residues 304 to 312 (FKDYVRDRA) form a helix HI-1 region. The residue at position 305 (Lys-305) is an N6-acetyllysine. Positions 323–330 (AAALAGYT) are helix HI-2. Positions 335 to 415 (IQLWQFLLEL…AGKRYVYRFV (81 aa)) form a DNA-binding region, ETS. The helix H4 stretch occupies residues 418–422 (LQSLL). The tract at residues 426–432 (PEELHAM) is helix H5.

It belongs to the ETS family. Binds DNA as a homodimer; homodimerization is required for transcription activation. Interacts with MAF and MAFB. Interacts with PAX5; the interaction alters DNA-binding properties. Interacts with DAXX. Interacts with UBE2I. Interacts with SP100; the interaction is direct and modulates ETS1 transcriptional activity. In terms of processing, phosphorylation at Ser-251, Ser-282 and Ser-285 by CaMK2/CaMKII in response to calcium signaling decreases affinity for DNA: an increasing number of phosphoserines causes DNA-binding to become progressively weaker. Sumoylated on Lys-15 and Lys-227, preferentially with SUMO2; which inhibits transcriptional activity. Post-translationally, ubiquitinated; which induces proteasomal degradation.

Its subcellular location is the nucleus. The protein resides in the cytoplasm. Its activity is regulated as follows. Autoinhibited by a module composed of four alpha helices (HI-1, HI-2, H4, and H5) that flank the DNA-binding ETS domain, reducing the affinity for DNA. Phosphorylation by CaMK2/CaMKII in response to calcium signaling decreases affinity for DNA. Functionally, transcription factor. Directly controls the expression of cytokine and chemokine genes in a wide variety of different cellular contexts. May control the differentiation, survival and proliferation of lymphoid cells. May also regulate angiogenesis through regulation of expression of genes controlling endothelial cell migration and invasion. This is Protein C-ets-1 (Ets1) from Mus musculus (Mouse).